We begin with the raw amino-acid sequence, 361 residues long: Phosphoserine aminotransferase (361 aa).

R42 lines the L-glutamate pocket. Residues 76 to 77 (AR), W102, T153, D173, and Q196 contribute to the pyridoxal 5'-phosphate site. K197 is modified (N6-(pyridoxal phosphate)lysine). 238–239 (NT) is a pyridoxal 5'-phosphate binding site.

The protein belongs to the class-V pyridoxal-phosphate-dependent aminotransferase family. SerC subfamily. As to quaternary structure, homodimer. Pyridoxal 5'-phosphate is required as a cofactor.

The protein resides in the cytoplasm. The enzyme catalyses O-phospho-L-serine + 2-oxoglutarate = 3-phosphooxypyruvate + L-glutamate. It catalyses the reaction 4-(phosphooxy)-L-threonine + 2-oxoglutarate = (R)-3-hydroxy-2-oxo-4-phosphooxybutanoate + L-glutamate. Its pathway is amino-acid biosynthesis; L-serine biosynthesis; L-serine from 3-phospho-D-glycerate: step 2/3. The protein operates within cofactor biosynthesis; pyridoxine 5'-phosphate biosynthesis; pyridoxine 5'-phosphate from D-erythrose 4-phosphate: step 3/5. Its function is as follows. Catalyzes the reversible conversion of 3-phosphohydroxypyruvate to phosphoserine and of 3-hydroxy-2-oxo-4-phosphonooxybutanoate to phosphohydroxythreonine. This chain is Phosphoserine aminotransferase, found in Pectobacterium carotovorum subsp. carotovorum (strain PC1).